A 299-amino-acid chain; its full sequence is Pyridoxal 5'-phosphate synthase subunit PdxS (299 aa).

Asp-29 serves as a coordination point for D-ribose 5-phosphate. The Schiff-base intermediate with D-ribose 5-phosphate role is filled by Lys-86. Position 158 (Gly-158) interacts with D-ribose 5-phosphate. Arg-170 contributes to the D-glyceraldehyde 3-phosphate binding site. Residues Gly-219 and 240-241 (GS) contribute to the D-ribose 5-phosphate site.

The protein belongs to the PdxS/SNZ family. In the presence of PdxT, forms a dodecamer of heterodimers.

The enzyme catalyses aldehydo-D-ribose 5-phosphate + D-glyceraldehyde 3-phosphate + L-glutamine = pyridoxal 5'-phosphate + L-glutamate + phosphate + 3 H2O + H(+). It participates in cofactor biosynthesis; pyridoxal 5'-phosphate biosynthesis. In terms of biological role, catalyzes the formation of pyridoxal 5'-phosphate from ribose 5-phosphate (RBP), glyceraldehyde 3-phosphate (G3P) and ammonia. The ammonia is provided by the PdxT subunit. Can also use ribulose 5-phosphate and dihydroxyacetone phosphate as substrates, resulting from enzyme-catalyzed isomerization of RBP and G3P, respectively. The sequence is that of Pyridoxal 5'-phosphate synthase subunit PdxS from Mycobacterium bovis (strain ATCC BAA-935 / AF2122/97).